Here is a 434-residue protein sequence, read N- to C-terminus: Protein FAM83A (434 aa).

Positions 1–298 (MSRSRHLGKI…LYASSKPVMG (298 aa)) are DUF1669. The segment at 76 to 97 (REPPCPPDTLGGAEAGPKGLDS) is disordered. A phosphoserine mark is found at S301, S327, S348, and S357. Residues 308–399 (VPPGAAPANG…HDGPPAAVYS (92 aa)) form a disordered region. Composition is skewed to low complexity over residues 320 to 332 (SSSSGSASDRTSS) and 348 to 357 (SVSASSGPCS). Over residues 358–369 (PAAPHPPPPPRF) the composition is skewed to pro residues.

Belongs to the FAM83 family. As to quaternary structure, directly interacts (via DUF1669) with casein kinase isoforms CSNK1A1, CSNK1A1L, CSNK1D and CSNK1E. Post-translationally, phosphorylated upon EGFR activation in a breast cancer cell line.

It localises to the cytoplasm. Functionally, involved in mitochondrial maintenance during adipogenesis. May be acting by playing a role in the maintenance of normal mitochondrial function. The sequence is that of Protein FAM83A from Homo sapiens (Human).